The sequence spans 494 residues: WD repeat-containing protein 37 (494 aa).

The segment at 1 to 38 is disordered; the sequence is MPTESGSWAAARQTKQKRKSHSLSIKRTNSSEQDRPGL. A compositionally biased stretch (polar residues) spans 22-31; that stretch reads SLSIKRTNSS. WD repeat units follow at residues 154 to 194 and 197 to 236; these read GHRD…CLIK and GHAG…PTPQ. A disordered region spans residues 236–266; sequence QPTADTSISGEEEVDFSDKDENDGDGDASSD. Residues 245 to 263 are compositionally biased toward acidic residues; sequence GEEEVDFSDKDENDGDGDA. WD repeat units lie at residues 279–318, 321–360, 365–403, 406–445, and 452–493; these read SHQG…LVHS, GHDQ…IHSV, GHTD…SPIA, RTDS…LARL, and GHRR…LLQE.

It localises to the cytoplasm. The protein localises to the nucleus. The sequence is that of WD repeat-containing protein 37 (wdr37) from Xenopus tropicalis (Western clawed frog).